Here is a 538-residue protein sequence, read N- to C-terminus: Phosphoenolpyruvate carboxykinase (ATP) (538 aa).

R64, Y205, and K211 together coordinate substrate. ATP is bound by residues K211, H230, and 246 to 254 (GLSGTGKTT). Mn(2+) is bound by residues K211 and H230. D267 lines the Mn(2+) pocket. Residues E295, R331, 447–448 (RI), and T453 contribute to the ATP site. R331 serves as a coordination point for substrate.

It belongs to the phosphoenolpyruvate carboxykinase (ATP) family. Monomer. It depends on Mn(2+) as a cofactor.

The protein resides in the cytoplasm. It carries out the reaction oxaloacetate + ATP = phosphoenolpyruvate + ADP + CO2. Its pathway is carbohydrate biosynthesis; gluconeogenesis. Functionally, involved in the gluconeogenesis. Catalyzes the conversion of oxaloacetate (OAA) to phosphoenolpyruvate (PEP) through direct phosphoryl transfer between the nucleoside triphosphate and OAA. This chain is Phosphoenolpyruvate carboxykinase (ATP), found in Mannheimia succiniciproducens (strain KCTC 0769BP / MBEL55E).